We begin with the raw amino-acid sequence, 116 residues long: Ribosome-binding factor A (116 aa).

This sequence belongs to the RbfA family. As to quaternary structure, monomer. Binds 30S ribosomal subunits, but not 50S ribosomal subunits or 70S ribosomes.

Its subcellular location is the cytoplasm. In terms of biological role, one of several proteins that assist in the late maturation steps of the functional core of the 30S ribosomal subunit. Associates with free 30S ribosomal subunits (but not with 30S subunits that are part of 70S ribosomes or polysomes). Required for efficient processing of 16S rRNA. May interact with the 5'-terminal helix region of 16S rRNA. The polypeptide is Ribosome-binding factor A (Chlorobium phaeobacteroides (strain DSM 266 / SMG 266 / 2430)).